A 152-amino-acid polypeptide reads, in one-letter code: MSTINTDTNEAMPHISVNAQYIKDLSLENPSAPSSLAALDQRPQIDLSLDINITNLSEENFYEVELNIEATARNEKYKLFHIELKYAGVFNLINIDSEQHPILLSVHCPAMIFPFARKIISSCTQDAGFQPLMIDPIDFGALYHKKMSEHQN.

It belongs to the SecB family. As to quaternary structure, homotetramer, a dimer of dimers. One homotetramer interacts with 1 SecA dimer.

It localises to the cytoplasm. In terms of biological role, one of the proteins required for the normal export of preproteins out of the cell cytoplasm. It is a molecular chaperone that binds to a subset of precursor proteins, maintaining them in a translocation-competent state. It also specifically binds to its receptor SecA. This is Protein-export protein SecB from Rickettsia akari (strain Hartford).